The sequence spans 670 residues: Probable plastid-lipid-associated protein 14, chloroplastic (670 aa).

Residues 1 to 52 (MALCGVCSTPNLPNLQVFRSVRNSSIGYKRNHSLWQLRSSSFRAKSVIFHCS) constitute a chloroplast transit peptide. Residues 88–399 (FRILDRVSIG…CLDALKHPFL (312 aa)) enclose the Protein kinase domain.

It belongs to the PAP/fibrillin family. Not autophosphorylated. As to expression, expressed in roots.

Its subcellular location is the plastid. It localises to the chloroplast. Directly regulated by DOF3.6/OBP3; unknown function. The sequence is that of Probable plastid-lipid-associated protein 14, chloroplastic (PAP14) from Arabidopsis thaliana (Mouse-ear cress).